The following is a 338-amino-acid chain: DNA-directed RNA polymerase subunit alpha (338 aa).

Positions 1–10 are enriched in polar residues; the sequence is MIQKNWQTLE. The disordered stretch occupies residues 1–24; it reads MIQKNWQTLEKPSKLDITPGSDPK. The segment at 1 to 234 is alpha N-terminal domain (alpha-NTD); sequence MIQKNWQTLE…DQLQMFINFE (234 aa). Residues 250 to 338 are alpha C-terminal domain (alpha-CTD); that stretch reads FNKNLLRKVD…DLAKRLEEPY (89 aa).

Belongs to the RNA polymerase alpha chain family. As to quaternary structure, homodimer. The RNAP catalytic core consists of 2 alpha, 1 beta, 1 beta' and 1 omega subunit. When a sigma factor is associated with the core the holoenzyme is formed, which can initiate transcription.

The enzyme catalyses RNA(n) + a ribonucleoside 5'-triphosphate = RNA(n+1) + diphosphate. Functionally, DNA-dependent RNA polymerase catalyzes the transcription of DNA into RNA using the four ribonucleoside triphosphates as substrates. This Rhodospirillum centenum (strain ATCC 51521 / SW) protein is DNA-directed RNA polymerase subunit alpha.